Reading from the N-terminus, the 290-residue chain is Agroclavine dehydrogenase (290 aa).

Belongs to the fgaFS/easG family. In terms of assembly, monomer.

It carries out the reaction agroclavine + NADP(+) = didehydroagroclavine + NADPH + H(+). It participates in alkaloid biosynthesis; ergot alkaloid biosynthesis. Agroclavine dehydrogenase; part of the gene cluster that mediates the biosynthesis of fungal ergot alkaloid. DmaW catalyzes the first step of ergot alkaloid biosynthesis by condensing dimethylallyl diphosphate (DMAP) and tryptophan to form 4-dimethylallyl-L-tryptophan. The second step is catalyzed by the methyltransferase easF that methylates 4-dimethylallyl-L-tryptophan in the presence of S-adenosyl-L-methionine, resulting in the formation of 4-dimethylallyl-L-abrine. The catalase easC and the FAD-dependent oxidoreductase easE then transform 4-dimethylallyl-L-abrine to chanoclavine-I which is further oxidized by easD in the presence of NAD(+), resulting in the formation of chanoclavine-I aldehyde. Agroclavine dehydrogenase easG then mediates the conversion of chanoclavine-I aldehyde to agroclavine via a non-enzymatic adduct reaction: the substrate is an iminium intermediate that is formed spontaneously from chanoclavine-I aldehyde in the presence of glutathione. The presence of easA is not required to complete this reaction. Further conversion of agroclavine to paspalic acid is a two-step process involving oxidation of agroclavine to elymoclavine and of elymoclavine to paspalic acid, the second step being performed by the elymoclavine oxidase cloA. Paspalic acid is then further converted to D-lysergic acid. Ergopeptines are assembled from D-lysergic acid and three different amino acids by the D-lysergyl-peptide-synthetases composed each of a monomudular and a trimodular nonribosomal peptide synthetase subunit. LpsB and lpsC encode the monomodular subunits responsible for D-lysergic acid activation and incorporation into the ergopeptine backbone. LpsA1 and A2 subunits encode the trimodular nonribosomal peptide synthetase assembling the tripeptide portion of ergopeptines. LpsA1 is responsible for formation of the major ergopeptine, ergotamine, and lpsA2 for alpha-ergocryptine, the minor ergopeptine of the total alkaloid mixture elaborated by C.purpurea. D-lysergyl-tripeptides are assembled by the nonribosomal peptide synthetases and released as N-(D-lysergyl-aminoacyl)-lactams. Cyclolization of the D-lysergyl-tripeptides is performed by the Fe(2+)/2-ketoglutarate-dependent dioxygenase easH which introduces a hydroxyl group into N-(D-lysergyl-aminoacyl)-lactam at alpha-C of the aminoacyl residue followed by spontaneous condensation with the terminal lactam carbonyl group. The protein is Agroclavine dehydrogenase of Claviceps purpurea (Ergot fungus).